The sequence spans 137 residues: Large ribosomal subunit protein uL16 (137 aa).

It belongs to the universal ribosomal protein uL16 family. In terms of assembly, part of the 50S ribosomal subunit.

Functionally, binds 23S rRNA and is also seen to make contacts with the A and possibly P site tRNAs. This is Large ribosomal subunit protein uL16 from Legionella pneumophila (strain Paris).